The chain runs to 156 residues: dCTP deaminase (156 aa).

DCTP-binding positions include 79–84, D95, Q124, and Y138; that span reads RSSLAR.

Belongs to the dCTP deaminase family. In terms of assembly, homotrimer.

It catalyses the reaction dCTP + H2O + H(+) = dUTP + NH4(+). It functions in the pathway pyrimidine metabolism; dUMP biosynthesis; dUMP from dCTP (dUTP route): step 1/2. Catalyzes the deamination of dCTP to dUTP. The sequence is that of dCTP deaminase from Pyrococcus horikoshii (strain ATCC 700860 / DSM 12428 / JCM 9974 / NBRC 100139 / OT-3).